Reading from the N-terminus, the 253-residue chain is MTTHRLVMVRHGESLWNQENRFCGWFDAELSEKGAEEAKRGATAIKDAKIEFDICYTSVLKRAIRTLWTILDVTDQMWVPVVRTWRLNERHYGGLTGLNKAETAAKHGEEQVKIWRRSFDTPPPPMDEKHNYYTSISKDRRYAGLKPEELPTCESLKDTIARALPFWNEEIAPKIKAGQRVLIAAHGNSLRGIVKHLEGMSDQAIMELNLPTGIPIVYELDQNLKPTKPMRFLGDEETVRKAMEAVAAQGKAK.

Thr3 is modified (phosphothreonine). Substrate contacts are provided by residues Arg10 to Asn17, Cys23 to Gly24, Arg62, Glu89 to Tyr92, Lys100, and Arg116 to Arg117. His11 serves as the catalytic Tele-phosphohistidine intermediate. The residue at position 14 (Ser14) is a Phosphoserine. The active-site Proton donor/acceptor is the Glu89. Phosphoserine is present on Ser118. Residue Thr121 is modified to Phosphothreonine. Residues Tyr132 and Tyr133 each carry the phosphotyrosine modification. Ser135 carries the phosphoserine modification. Thr152 carries the phosphothreonine modification. Residue Gly187–Asn188 coordinates substrate.

It belongs to the phosphoglycerate mutase family. BPG-dependent PGAM subfamily. In terms of assembly, homodimer. Interacts with ENO1. As to expression, expressed in the testes (at protein level).

The enzyme catalyses (2R)-2-phosphoglycerate = (2R)-3-phosphoglycerate. The catalysed reaction is (2R)-3-phospho-glyceroyl phosphate = (2R)-2,3-bisphosphoglycerate + H(+). Its function is as follows. Interconversion of 3- and 2-phosphoglycerate with 2,3-bisphosphoglycerate as the primer of the reaction. Can also catalyze the reaction of EC 5.4.2.4 (synthase), but with a reduced activity. This Mus musculus (Mouse) protein is Phosphoglycerate mutase 2 (Pgam2).